A 578-amino-acid chain; its full sequence is 2-hydroxyacyl-CoA lyase 1 (578 aa).

The residue at position 4 (Ser4) is a Phosphoserine. Glu60 serves as a coordination point for thiamine diphosphate. 3 positions are modified to N6-succinyllysine: Lys351, Lys358, and Lys365. Positions 401 to 486 (TMDIGRTVLQ…LLVVNNNGIY (86 aa)) are thiamine pyrophosphate binding. Residues Asp455 and Asn482 each contribute to the Mg(2+) site. Residues 576-578 (SNM) carry the Microbody targeting signal motif.

It belongs to the TPP enzyme family. Homotetramer. Requires Mg(2+) as cofactor. The cofactor is thiamine diphosphate. Widely expressed.

The protein localises to the peroxisome. The enzyme catalyses a 2-hydroxy-3-methyl fatty acyl-CoA = a 2-methyl-branched fatty aldehyde + formyl-CoA. It catalyses the reaction an (R)-2-hydroxy-long-chain-fatty acyl-CoA = a long-chain fatty aldehyde + formyl-CoA. It carries out the reaction 2-hydroxy-3-methylhexadecanoyl-CoA = 2-methylpentadecanal + formyl-CoA. The catalysed reaction is 2-hydroxyoctadecanoyl-CoA = heptadecanal + formyl-CoA. The enzyme catalyses 2-hydroxyphytanoyl-CoA = 2,6,10,14-tetramethylpentadecanal + formyl-CoA. It functions in the pathway lipid metabolism; fatty acid metabolism. Peroxisomal 2-OH acyl-CoA lyase involved in the cleavage (C1 removal) reaction in the fatty acid alpha-oxydation in a thiamine pyrophosphate (TPP)-dependent manner. Involved in the degradation of 3-methyl-branched fatty acids like phytanic acid and the shortening of 2-hydroxy long-chain fatty acids. Plays a significant role in the biosynthesis of heptadecanal in the liver. In Homo sapiens (Human), this protein is 2-hydroxyacyl-CoA lyase 1.